The chain runs to 476 residues: Siroheme synthase (476 aa).

Residues 1-207 (MTANVLFPLF…QRHAEAEAVL (207 aa)) form a precorrin-2 dehydrogenase /sirohydrochlorin ferrochelatase region. Residues 25-26 (KV) and 46-47 (PS) each bind NAD(+). Residue serine 132 is modified to Phosphoserine. Residues 220 to 476 (GSVTLVGAGA…SAPCPPALIL (257 aa)) are uroporphyrinogen-III C-methyltransferase. Catalysis depends on aspartate 252, which acts as the Proton acceptor. Residue lysine 274 is the Proton donor of the active site. S-adenosyl-L-methionine-binding positions include 305–307 (GGD), valine 310, 335–336 (TA), methionine 387, and glycine 416.

The protein in the N-terminal section; belongs to the precorrin-2 dehydrogenase / sirohydrochlorin ferrochelatase family. This sequence in the C-terminal section; belongs to the precorrin methyltransferase family.

The enzyme catalyses uroporphyrinogen III + 2 S-adenosyl-L-methionine = precorrin-2 + 2 S-adenosyl-L-homocysteine + H(+). It carries out the reaction precorrin-2 + NAD(+) = sirohydrochlorin + NADH + 2 H(+). The catalysed reaction is siroheme + 2 H(+) = sirohydrochlorin + Fe(2+). It participates in cofactor biosynthesis; adenosylcobalamin biosynthesis; precorrin-2 from uroporphyrinogen III: step 1/1. It functions in the pathway cofactor biosynthesis; adenosylcobalamin biosynthesis; sirohydrochlorin from precorrin-2: step 1/1. The protein operates within porphyrin-containing compound metabolism; siroheme biosynthesis; precorrin-2 from uroporphyrinogen III: step 1/1. Its pathway is porphyrin-containing compound metabolism; siroheme biosynthesis; siroheme from sirohydrochlorin: step 1/1. It participates in porphyrin-containing compound metabolism; siroheme biosynthesis; sirohydrochlorin from precorrin-2: step 1/1. Functionally, multifunctional enzyme that catalyzes the SAM-dependent methylations of uroporphyrinogen III at position C-2 and C-7 to form precorrin-2 via precorrin-1. Then it catalyzes the NAD-dependent ring dehydrogenation of precorrin-2 to yield sirohydrochlorin. Finally, it catalyzes the ferrochelation of sirohydrochlorin to yield siroheme. The polypeptide is Siroheme synthase (Xylella fastidiosa (strain 9a5c)).